Here is a 366-residue protein sequence, read N- to C-terminus: NADH-quinone oxidoreductase subunit D (366 aa).

The protein belongs to the complex I 49 kDa subunit family. In terms of assembly, NDH-1 is composed of 14 different subunits. Subunits NuoB, C, D, E, F, and G constitute the peripheral sector of the complex.

The protein localises to the cell membrane. The catalysed reaction is a quinone + NADH + 5 H(+)(in) = a quinol + NAD(+) + 4 H(+)(out). Functionally, NDH-1 shuttles electrons from NADH, via FMN and iron-sulfur (Fe-S) centers, to quinones in the respiratory chain. The immediate electron acceptor for the enzyme in this species is believed to be a menaquinone. Couples the redox reaction to proton translocation (for every two electrons transferred, four hydrogen ions are translocated across the cytoplasmic membrane), and thus conserves the redox energy in a proton gradient. This chain is NADH-quinone oxidoreductase subunit D, found in Bacillus thuringiensis subsp. konkukian (strain 97-27).